The primary structure comprises 207 residues: Protein DMP1 (207 aa).

The interval M1–M20 is disordered. The next 4 helical transmembrane spans lie at L33–T53, V64–D84, I121–D141, and L159–P179.

This sequence belongs to the plant DMP1 protein family. Expressed in leaves, siliques and roots.

It localises to the endoplasmic reticulum membrane. The protein resides in the vacuole membrane. In terms of biological role, involved in membrane remodeling including fission during breakdown of the endoplasmic reticulum (ER) and the tonoplast during leaf senescence and in membrane fusion during vacuole biogenesis in roots. This Arabidopsis thaliana (Mouse-ear cress) protein is Protein DMP1.